Reading from the N-terminus, the 348-residue chain is N-acetyl-gamma-glutamyl-phosphate reductase (348 aa).

Cysteine 149 is an active-site residue.

Belongs to the NAGSA dehydrogenase family. Type 1 subfamily.

It localises to the cytoplasm. It carries out the reaction N-acetyl-L-glutamate 5-semialdehyde + phosphate + NADP(+) = N-acetyl-L-glutamyl 5-phosphate + NADPH + H(+). The protein operates within amino-acid biosynthesis; L-arginine biosynthesis; N(2)-acetyl-L-ornithine from L-glutamate: step 3/4. In terms of biological role, catalyzes the NADPH-dependent reduction of N-acetyl-5-glutamyl phosphate to yield N-acetyl-L-glutamate 5-semialdehyde. This is N-acetyl-gamma-glutamyl-phosphate reductase from Cellvibrio japonicus (strain Ueda107) (Pseudomonas fluorescens subsp. cellulosa).